A 947-amino-acid chain; its full sequence is DNA mismatch repair protein MutS (947 aa).

Position 620–627 (620–627) interacts with ATP; the sequence is GPNMSGKS.

The protein belongs to the DNA mismatch repair MutS family.

This protein is involved in the repair of mismatches in DNA. It is possible that it carries out the mismatch recognition step. This protein has a weak ATPase activity. The chain is DNA mismatch repair protein MutS from Clostridioides difficile (strain 630) (Peptoclostridium difficile).